Consider the following 203-residue polypeptide: Ribosome maturation factor RimP (203 aa).

Residues 179–203 are disordered; the sequence is VSSEGEDGGEARQAPKLNPKKPGKK.

The protein belongs to the RimP family.

It localises to the cytoplasm. Its function is as follows. Required for maturation of 30S ribosomal subunits. This Gluconobacter oxydans (strain 621H) (Gluconobacter suboxydans) protein is Ribosome maturation factor RimP.